Here is a 623-residue protein sequence, read N- to C-terminus: Riboflavin biosynthesis protein PYRR, chloroplastic (623 aa).

The N-terminal 45 residues, 1 to 45, are a transit peptide targeting the chloroplast; the sequence is MPLPQPLLGGASPAPARAASSFLHPLLHTRHRVSTAPAAASSFVP. The region spanning 52 to 181 is the CMP/dCMP-type deaminase domain; that stretch reads ANDAMLLRRA…ALRNEGIQVD (130 aa).

It in the C-terminal section; belongs to the YbiA family.

Its subcellular location is the plastid. It is found in the chloroplast. It catalyses the reaction 5-amino-6-(5-phospho-D-ribitylamino)uracil + NADP(+) = 5-amino-6-(5-phospho-D-ribosylamino)uracil + NADPH + H(+). The enzyme catalyses 2,5-diamino-6-hydroxy-4-(5-phosphoribosylamino)-pyrimidine + H2O = 2,5,6-triamino-4-hydroxypyrimidine + D-ribose 5-phosphate. It carries out the reaction 5-amino-6-(5-phospho-D-ribosylamino)uracil + H2O = 5,6-diaminouracil + D-ribose 5-phosphate. It functions in the pathway cofactor biosynthesis; riboflavin biosynthesis; 5-amino-6-(D-ribitylamino)uracil from GTP: step 3/4. Its function is as follows. Pyrimidine reductase involved in the riboflavin biosynthesis pathway. Also has a non-functional N-terminal deaminase domain that lacks the catalytically essential zinc-binding residues. 39% activity when NADH replaces NADPH. No evidence for a phosphatase activity conferred by the N-terminal domain. In terms of biological role, catalyzes the hydrolysis of the N-glycosidic bond in the first two intermediates of riboflavin biosynthesis, which are highly reactive metabolites, yielding relatively innocuous products. Thus, can divert a surplus of harmful intermediates into relatively harmless products and pre-empt the damage these intermediates would otherwise do. Has no activity against GTP, nucleoside monophosphates or ADP-ribose. This chain is Riboflavin biosynthesis protein PYRR, chloroplastic (PYRR), found in Zea mays (Maize).